A 167-amino-acid chain; its full sequence is uncharacterized protein (167 aa).

It localises to the mitochondrion. This is an uncharacterized protein from Ascobolus immersus.